We begin with the raw amino-acid sequence, 283 residues long: Protein/nucleic acid deglycase HchA (283 aa).

Zn(2+) is bound by residues His-86, Glu-91, and His-123. Cys-185 functions as the Nucleophile in the catalytic mechanism.

Belongs to the peptidase C56 family. HchA subfamily. In terms of assembly, homodimer.

The protein localises to the cytoplasm. It catalyses the reaction N(omega)-(1-hydroxy-2-oxopropyl)-L-arginyl-[protein] + H2O = lactate + L-arginyl-[protein] + H(+). The catalysed reaction is N(6)-(1-hydroxy-2-oxopropyl)-L-lysyl-[protein] + H2O = lactate + L-lysyl-[protein] + H(+). The enzyme catalyses S-(1-hydroxy-2-oxopropyl)-L-cysteinyl-[protein] + H2O = lactate + L-cysteinyl-[protein] + H(+). It carries out the reaction N(omega)-(1-hydroxy-2-oxoethyl)-L-arginyl-[protein] + H2O = L-arginyl-[protein] + glycolate + H(+). It catalyses the reaction N(6)-(1-hydroxy-2-oxoethyl)-L-lysyl-[protein] + H2O = glycolate + L-lysyl-[protein] + H(+). The catalysed reaction is S-(1-hydroxy-2-oxoethyl)-L-cysteinyl-[protein] + H2O = glycolate + L-cysteinyl-[protein] + H(+). The enzyme catalyses N(2)-(1-hydroxy-2-oxopropyl)-dGTP + H2O = lactate + dGTP + H(+). It carries out the reaction N(2)-(1-hydroxy-2-oxopropyl)-GTP + H2O = lactate + GTP + H(+). It catalyses the reaction N(2)-(1-hydroxy-2-oxopropyl)-GDP + H2O = lactate + GDP + H(+). The catalysed reaction is N(2)-(1-hydroxy-2-oxopropyl)-GMP + H2O = lactate + GMP + H(+). The enzyme catalyses N(2)-(1-hydroxy-2-oxoethyl)-dGTP + H2O = dGTP + glycolate + H(+). It carries out the reaction N(2)-(1-hydroxy-2-oxoethyl)-GTP + H2O = glycolate + GTP + H(+). It catalyses the reaction N(2)-(1-hydroxy-2-oxoethyl)-GDP + H2O = glycolate + GDP + H(+). The catalysed reaction is N(2)-(1-hydroxy-2-oxoethyl)-GMP + H2O = glycolate + GMP + H(+). The enzyme catalyses an N(2)-(1-hydroxy-2-oxopropyl)-guanosine in RNA + H2O = a guanosine in RNA + lactate + H(+). It carries out the reaction an N(2)-(1-hydroxy-2-oxopropyl)-2'-deoxyguanosine in DNA + H2O = a 2'-deoxyguanosine in DNA + lactate + H(+). It catalyses the reaction an N(2)-(1-hydroxy-2-oxoethyl)-guanosine in RNA + H2O = a guanosine in RNA + glycolate + H(+). The catalysed reaction is an N(2)-(1-hydroxy-2-oxoethyl)-2'-deoxyguanosine in DNA + H2O = a 2'-deoxyguanosine in DNA + glycolate + H(+). Protein and nucleotide deglycase that catalyzes the deglycation of the Maillard adducts formed between amino groups of proteins or nucleotides and reactive carbonyl groups of glyoxals. Thus, functions as a protein deglycase that repairs methylglyoxal- and glyoxal-glycated proteins, and releases repaired proteins and lactate or glycolate, respectively. Deglycates cysteine, arginine and lysine residues in proteins, and thus reactivates these proteins by reversing glycation by glyoxals. Acts on early glycation intermediates (hemithioacetals and aminocarbinols), preventing the formation of Schiff bases and advanced glycation endproducts (AGE). Also functions as a nucleotide deglycase able to repair glycated guanine in the free nucleotide pool (GTP, GDP, GMP, dGTP) and in DNA and RNA. Is thus involved in a major nucleotide repair system named guanine glycation repair (GG repair), dedicated to reversing methylglyoxal and glyoxal damage via nucleotide sanitization and direct nucleic acid repair. Plays an important role in protecting cells from carbonyl stress. The protein is Protein/nucleic acid deglycase HchA of Escherichia coli (strain K12 / MC4100 / BW2952).